We begin with the raw amino-acid sequence, 206 residues long: Guanylate kinase (206 aa).

One can recognise a Guanylate kinase-like domain in the interval 7–185 (GLLIVISGPS…AVEKIRAIII (179 aa)). Position 14–21 (14–21 (GPSGAGKG)) interacts with ATP.

It belongs to the guanylate kinase family.

The protein localises to the cytoplasm. It catalyses the reaction GMP + ATP = GDP + ADP. Functionally, essential for recycling GMP and indirectly, cGMP. The polypeptide is Guanylate kinase (Caldanaerobacter subterraneus subsp. tengcongensis (strain DSM 15242 / JCM 11007 / NBRC 100824 / MB4) (Thermoanaerobacter tengcongensis)).